The primary structure comprises 210 residues: 3-hexulose-6-phosphate synthase (210 aa).

It belongs to the HPS/KGPDC family. HPS subfamily.

The enzyme catalyses D-ribulose 5-phosphate + formaldehyde = D-arabino-hex-3-ulose 6-phosphate. It functions in the pathway one-carbon metabolism; formaldehyde assimilation via RuMP pathway; D-fructose 6-phosphate from D-ribulose 5-phosphate and formaldehyde: step 1/2. Its function is as follows. Catalyzes the condensation of ribulose 5-phosphate with formaldehyde to form 3-hexulose 6-phosphate. This is 3-hexulose-6-phosphate synthase from Staphylococcus epidermidis (strain ATCC 35984 / DSM 28319 / BCRC 17069 / CCUG 31568 / BM 3577 / RP62A).